Consider the following 311-residue polypeptide: Methionyl-tRNA formyltransferase (311 aa).

112–115 (SLLP) serves as a coordination point for (6S)-5,6,7,8-tetrahydrofolate.

It belongs to the Fmt family.

It catalyses the reaction L-methionyl-tRNA(fMet) + (6R)-10-formyltetrahydrofolate = N-formyl-L-methionyl-tRNA(fMet) + (6S)-5,6,7,8-tetrahydrofolate + H(+). Its function is as follows. Attaches a formyl group to the free amino group of methionyl-tRNA(fMet). The formyl group appears to play a dual role in the initiator identity of N-formylmethionyl-tRNA by promoting its recognition by IF2 and preventing the misappropriation of this tRNA by the elongation apparatus. This chain is Methionyl-tRNA formyltransferase, found in Sinorhizobium medicae (strain WSM419) (Ensifer medicae).